We begin with the raw amino-acid sequence, 666 residues long: DEAD-box ATP-dependent RNA helicase 30 (666 aa).

The disordered stretch occupies residues 53-102 (PDPNLPRRLPFPSSSSTPTAAAPPDSGEPSRARARTETYRTGDMNPYDLR). The span at 64-76 (PSSSSTPTAAAPP) shows a compositional bias: low complexity. Positions 80–92 (EPSRARARTETYR) are enriched in basic and acidic residues. Positions 251–279 (RYFQEANFPDYCMQAIAKSGFVEPTPIQS) match the Q motif motif. In terms of domain architecture, Helicase ATP-binding spans 282–457 (WPMALKGRDM…RQFLQNPYKV (176 aa)). 295–302 (AQTGSGKT) serves as a coordination point for ATP. Residues 405–408 (DEAD) carry the DEAD box motif. Positions 485 to 630 (RLSKLLSDLM…VVNPALESMA (146 aa)) constitute a Helicase C-terminal domain. The interval 632–666 (SASSMGGGNFRSRGRGGFGNRSGSNSIPIRGRRPY) is disordered. Residues 636-651 (MGGGNFRSRGRGGFGN) are compositionally biased toward gly residues.

It belongs to the DEAD box helicase family. DDX5/DBP2 subfamily.

It is found in the nucleus. It catalyses the reaction ATP + H2O = ADP + phosphate + H(+). In terms of biological role, ATP-dependent RNA helicase involved nonsense-mediated mRNA decay and ribosome biogenesis through rRNA processing. The chain is DEAD-box ATP-dependent RNA helicase 30 from Oryza sativa subsp. japonica (Rice).